A 680-amino-acid chain; its full sequence is Harmonin-binding protein USHBP1 (680 aa).

The segment covering 1-15 (MSARATRPRSRRGRH) has biased composition (basic residues). Disordered stretches follow at residues 1–51 (MSAR…YLGP) and 134–161 (KSVE…PGQQ). Residues 179–218 (NREDELACTQASLQDAQAEKETLQRQVQELEDSLMQMEAS) adopt a coiled-coil conformation. Disordered regions lie at residues 220-247 (PTPI…VPQD) and 384-405 (TMEV…PTPE). 2 coiled-coil regions span residues 363-386 (TKGD…ATME) and 467-506 (QIQQ…LRAQ). The interval 524 to 549 (FAGDGSSGGSSEDPSSEEEAGEDRQQ) is disordered. The stretch at 573–662 (QELSASLARA…QAEELAVLTA (90 aa)) forms a coiled coil.

It belongs to the MCC family. As to quaternary structure, interacts via its C-terminus with the first PDZ domain of USH1C.

The polypeptide is Harmonin-binding protein USHBP1 (Mus musculus (Mouse)).